The chain runs to 332 residues: Probable L-asparaginase (332 aa).

Residues 6 to 332 (PTIALLATGG…AKIQEMFEEY (327 aa)) form the Asparaginase/glutaminase domain. Catalysis depends on T16, which acts as the O-isoaspartyl threonine intermediate. Residues S62 and 95–96 (TD) contribute to the substrate site.

This sequence belongs to the asparaginase 1 family.

Its subcellular location is the cytoplasm. The enzyme catalyses L-asparagine + H2O = L-aspartate + NH4(+). In Helicobacter pylori (strain J99 / ATCC 700824) (Campylobacter pylori J99), this protein is Probable L-asparaginase (ansA).